A 357-amino-acid chain; its full sequence is Protein ATP1B4 (357 aa).

At 1–110 (MRRQLRSRRA…FLARTGQSWS (110 aa)) the chain is on the nuclear side. The interval 15-80 (YSYRYRLDDP…EEGQGQPTGN (66 aa)) is disordered. Over residues 52-73 (EEEEEEEEKEEEEEEEKEEEEG) the composition is skewed to acidic residues. The helical; Signal-anchor for type II membrane protein transmembrane segment at 111-131 (LILLIYFFFYASLAAVITLCM) threads the bilayer. Residues 132–357 (YTLFLTISPY…RVIFTLNIET (226 aa)) lie on the Perinuclear space side of the membrane.

Belongs to the X(+)/potassium ATPases subunit beta family. As to quaternary structure, associates with a SMAD7-transcriptional complex. Interacts with SNW1 and TOR1AIP1. According to PubMed:17592128, does not associate with known Na,K-ATPase alpha-subunits. As to expression, highly expressed in skeletal muscle and at a lower level in heart.

Its subcellular location is the nucleus inner membrane. Its function is as follows. May act as a transcriptional coregulator during muscle development through its interaction with SNW1. Has lost its ancestral function as a Na,K-ATPase beta-subunit. This chain is Protein ATP1B4 (ATP1B4), found in Homo sapiens (Human).